Reading from the N-terminus, the 72-residue chain is Toxin Cll8 (72 aa).

The N-terminal stretch at 1–4 (TVSA) is a signal peptide. Residues 5–70 (KEGYLVKKSN…TWPLPNKSCG (66 aa)) enclose the LCN-type CS-alpha/beta domain. Intrachain disulfides connect cysteine 16-cysteine 69, cysteine 20-cysteine 45, cysteine 29-cysteine 50, and cysteine 33-cysteine 52. Cysteine 69 is modified (cysteine amide).

Belongs to the long (4 C-C) scorpion toxin superfamily. Sodium channel inhibitor family. Beta subfamily. Expressed by the venom gland.

It is found in the secreted. Functionally, beta toxins bind voltage-independently at site-4 of sodium channels (Nav) and shift the voltage of activation toward more negative potentials thereby affecting sodium channel activation and promoting spontaneous and repetitive firing. The chain is Toxin Cll8 from Centruroides limpidus (Mexican scorpion).